Consider the following 367-residue polypeptide: MAHQKREATSDNGGGDEEWASKRPKVVGAAAEKEHILTSDASHETNGDEAQGGDASRKENTVSTNPCVSDEKAATNSNVSSGHGVILTSVEADAAEDKGCRHTMEDAWVLLPDASMESPGNLRCAHFAIYDGHGGRLAAEYAQKHLHQNVIAAGLPRELMDVKAAKKAIIEGFRRTDECLLQESTKGNWQDGATAVCVWVLGQTVVVANAGDAKAVLARSTSADGEGAVDDAKSQLKAIVLTREHKAIFPQERARIQKAGGSVGPNGRLQGRIEVSRALGDRQFKKVGLIATPDVHSFEVTRKDHFIILGCDGLWGVFGPGDAVEFVQNQLKETSSATLAVRRLVKEAVRERRCKDNCTAVLIVFKH.

The tract at residues 1–79 (MAHQKREATS…DEKAATNSNV (79 aa)) is disordered. A compositionally biased stretch (basic and acidic residues) spans 31 to 46 (AEKEHILTSDASHETN). In terms of domain architecture, PPM-type phosphatase spans 91–365 (EADAAEDKGC…DNCTAVLIVF (275 aa)). 4 residues coordinate Mn(2+): D131, G132, D312, and D356.

This sequence belongs to the PP2C family. It depends on Mg(2+) as a cofactor. Requires Mn(2+) as cofactor.

The enzyme catalyses O-phospho-L-seryl-[protein] + H2O = L-seryl-[protein] + phosphate. The catalysed reaction is O-phospho-L-threonyl-[protein] + H2O = L-threonyl-[protein] + phosphate. The polypeptide is Probable protein phosphatase 2C 67 (Oryza sativa subsp. japonica (Rice)).